A 149-amino-acid polypeptide reads, in one-letter code: MQVILLDKVANLGSLGDQVNVKAGYARNFLVPQGKAVPATKKNVEYFEARRAELEAKLADVLAAANARAEKINALETVTIASKAGDEGKLFGSIGTRDIADAVTAAGVDVAKSEVRLPNGVLRTTGEHEVNFQVHSEVFAKVIINVVAE.

Belongs to the bacterial ribosomal protein bL9 family.

Its function is as follows. Binds to the 23S rRNA. This is Large ribosomal subunit protein bL9 from Salmonella agona (strain SL483).